The sequence spans 391 residues: S-adenosylmethionine synthase 5 (391 aa).

Glutamate 9 lines the Mg(2+) pocket. Histidine 15 is a binding site for ATP. Glutamate 43 is a binding site for K(+). 2 residues coordinate L-methionine: glutamate 56 and glutamine 99. Residues 167 to 169 (DGK), 235 to 238 (SGRF), aspartate 246, 252 to 253 (RK), alanine 269, lysine 273, and lysine 277 each bind ATP. Aspartate 246 lines the L-methionine pocket. Lysine 277 is a binding site for L-methionine.

Belongs to the AdoMet synthase family. Homotetramer. Mn(2+) serves as cofactor. Mg(2+) is required as a cofactor. The cofactor is Co(2+). Requires K(+) as cofactor.

It localises to the cytoplasm. The catalysed reaction is L-methionine + ATP + H2O = S-adenosyl-L-methionine + phosphate + diphosphate. Its pathway is amino-acid biosynthesis; S-adenosyl-L-methionine biosynthesis; S-adenosyl-L-methionine from L-methionine: step 1/1. Catalyzes the formation of S-adenosylmethionine from methionine and ATP. The reaction comprises two steps that are both catalyzed by the same enzyme: formation of S-adenosylmethionine (AdoMet) and triphosphate, and subsequent hydrolysis of the triphosphate. This Vitis vinifera (Grape) protein is S-adenosylmethionine synthase 5 (METK5).